We begin with the raw amino-acid sequence, 528 residues long: Phosphoenolpyruvate carboxykinase (ATP) (528 aa).

Substrate is bound by residues Arg56, Tyr192, and Lys198. Residues Lys198, His217, and 233-241 (GLSGTGKTT) contribute to the ATP site. Residues Lys198 and His217 each contribute to the Mn(2+) site. Position 254 (Asp254) interacts with Mn(2+). The ATP site is built by Glu282, Arg319, and Thr444. A substrate-binding site is contributed by Arg319.

This sequence belongs to the phosphoenolpyruvate carboxykinase (ATP) family. Mn(2+) is required as a cofactor.

It localises to the cytoplasm. It catalyses the reaction oxaloacetate + ATP = phosphoenolpyruvate + ADP + CO2. Its pathway is carbohydrate biosynthesis; gluconeogenesis. Functionally, involved in the gluconeogenesis. Catalyzes the conversion of oxaloacetate (OAA) to phosphoenolpyruvate (PEP) through direct phosphoryl transfer between the nucleoside triphosphate and OAA. This is Phosphoenolpyruvate carboxykinase (ATP) from Bacillus cereus (strain 03BB102).